Reading from the N-terminus, the 102-residue chain is Mini zinc finger protein 1 (102 aa).

Basic residues predominate over residues 1 to 13; that stretch reads MMKKRQMVIKQRS. The tract at residues 1–34 is disordered; it reads MMKKRQMVIKQRSRNSNTSSSWTTTSSSSSSSEI. Over residues 14–32 the composition is skewed to low complexity; that stretch reads RNSNTSSSWTTTSSSSSSS. The ZF-HD dimerization-type; degenerate zinc finger occupies 39 to 88; sequence YVECQKNHAANIGGYAVDGCREFMAAGVEGTVDALRCAACGCHRNFHRKE.

As to quaternary structure, homo- and heterodimers. Interacts with ZHD1, ZHD5, ZHD6, ZHD7, ZHD8, ZHD10 and ZHD13. As to expression, mostly expressed in roots and stems, present in siliques and seedlings, and weakly observed in petioles, leaves and flowers.

It localises to the cytoplasm. In terms of biological role, inhibits zinc finger homeodomain (ZHD) transcription factors, such as ZHD5, by interacting with them to prevent both their nuclear localization and their DNA-binding properties. Involved in integrating signals from multiple hormones by preventing the expression of genes involved in gibberellic acid (GA), auxin and brassinosteroid signaling and by promoting the expression of abscisic acid (ABA)-responsive genes. Regulates several development aspects, including photomorphogenesis, apical dominance, longevity, flower morphology and fertility, as well as root and stem elongation. Promotes the formation of ectopic shoot meristems on leaf margins. The chain is Mini zinc finger protein 1 (MIF1) from Arabidopsis thaliana (Mouse-ear cress).